The following is a 1169-amino-acid chain: DNA repair protein RAD5 (1169 aa).

Residue S2 is modified to N-acetylserine. Phosphoserine occurs at positions 20, 23, 129, and 130. Positions 302 to 317 are enriched in basic and acidic residues; it reads MKRRRTEGGNKREKDN. The interval 302-327 is disordered; sequence MKRRRTEGGNKREKDNGNFGRTLTET. The Helicase ATP-binding domain maps to 519–730; the sequence is PILKTMIKGG…YSLVKFLELD (212 aa). 532–539 provides a ligand contact to ATP; that stretch reads DEMGLGKT. Residues 681–684 carry the DEGH box motif; it reads DEGH. The RING-type zinc-finger motif lies at 914–961; that stretch reads CSICTTEPMDLDKALFTECGHSFCEKCLFEYIEFQNSKNLGLKCPNCR. The Helicase C-terminal domain occupies 995–1165; that stretch reads KITALLKELQ…RRKRRIEEIQ (171 aa).

This sequence belongs to the SNF2/RAD54 helicase family. In terms of assembly, homodimer. Interacts with POL30, RAD18, UBC9 and UBC13. The cofactor is Mg(2+). Requires Mn(2+) as cofactor. Ca(2+) serves as cofactor.

It localises to the cytoplasm. It is found in the nucleus. Its function is as follows. Probable helicase, member of the UBC2/RAD6 epistasis group. Functions with the DNA repair protein RAD18 in error-free postreplication DNA repair. Involved in the maintenance of wild-type rates of instability of simple repetitive sequences such as poly(GT) repeats. Seems to be involved in maintaining a balance which acts in favor of error-prone non-homologous joining during DNA double-strand breaks repairs. Recruits the UBC13-MMS2 dimer to chromatin for DNA repair. The sequence is that of DNA repair protein RAD5 (RAD5) from Saccharomyces cerevisiae (strain ATCC 204508 / S288c) (Baker's yeast).